The following is a 122-amino-acid chain: Large ribosomal subunit protein uL14c (122 aa).

This sequence belongs to the universal ribosomal protein uL14 family. As to quaternary structure, part of the 50S ribosomal subunit.

Its subcellular location is the plastid. Functionally, binds to 23S rRNA. The protein is Large ribosomal subunit protein uL14c of Cuscuta obtusiflora (Peruvian dodder).